The sequence spans 239 residues: Phosducin-like protein 3 (239 aa).

N-acetylmethionine is present on methionine 1. Residues 32–180 (EAEEEQRILQ…EGDIKAQFIG (149 aa)) enclose the Phosducin domain. Residues serine 43, serine 234, and serine 236 each carry the phosphoserine modification. Residues 91–239 (FGEVLEISGK…MKRDSDSEGD (149 aa)) are thioredoxin fold.

The protein belongs to the phosducin family. Interacts (via thioredoxin fold region) with KDR/VEGFR2 (via juxtamembrane domain). Forms ternary complexes with the chaperonin CCT complex and actin substrate, leading to inhibition of actin folding. Interacts with XIAP (via BIR 3 and RING domain). Interacts with HSP90AA1 and HSP90AB1. In terms of processing, N-terminal methionine acetylation destabilizes the protein.

It localises to the cytoplasm. The protein resides in the perinuclear region. It is found in the endoplasmic reticulum. Acts as a chaperone for the angiogenic VEGF receptor KDR/VEGFR2, increasing its abundance by inhibiting its ubiquitination and degradation. Inhibits the folding activity of the chaperonin-containing T-complex (CCT) which leads to inhibition of cytoskeletal actin folding. Acts as a chaperone during heat shock alongside HSP90 and HSP40/70 chaperone complexes. Modulates the activation of caspases during apoptosis. The polypeptide is Phosducin-like protein 3 (PDCL3) (Pongo abelii (Sumatran orangutan)).